The sequence spans 102 residues: Putative peripheral benzodiazepine receptor-related protein (102 aa).

In terms of tissue distribution, ubiquitous.

In Homo sapiens (Human), this protein is Putative peripheral benzodiazepine receptor-related protein (TSPO).